A 603-amino-acid polypeptide reads, in one-letter code: Probable NOT transcription complex subunit VIP2 (603 aa).

Composition is skewed to polar residues over residues 1–28 (MQGT…NNLS) and 36–70 (NLPS…PGYS). 4 disordered regions span residues 1–70 (MQGT…PGYS), 212–242 (NDGS…LGSL), 306–335 (AGFN…GGVS), and 355–377 (SSHS…PLNS). Residues 312–335 (GTYSSNRPQQQLQHAPSVSSGGVS) are compositionally biased toward polar residues.

The protein belongs to the CNOT2/3/5 family. In terms of assembly, binds to VIP1. Interacts with Agrobacterium tumefaciens VirE2. Forms a complex made of Agrobacterium VirE2, VIP1, VIP2 and single-stranded DNA (ssDNA).

It localises to the nucleus. Functionally, transcriptional regulator required for Agrobacterium-mediated stable genetic transformation by T-DNA integration in host genome, but not for T-DNA transient expression. The polypeptide is Probable NOT transcription complex subunit VIP2 (VIP2) (Nicotiana benthamiana).